The sequence spans 207 residues: uncharacterized protein (207 aa).

This sequence belongs to the methyltransferase superfamily.

This is an uncharacterized protein from Escherichia coli (strain K12).